A 190-amino-acid chain; its full sequence is 3-isopropylmalate dehydratase small subunit (190 aa).

This sequence belongs to the LeuD family. LeuD type 1 subfamily. As to quaternary structure, heterodimer of LeuC and LeuD.

The enzyme catalyses (2R,3S)-3-isopropylmalate = (2S)-2-isopropylmalate. It participates in amino-acid biosynthesis; L-leucine biosynthesis; L-leucine from 3-methyl-2-oxobutanoate: step 2/4. In terms of biological role, catalyzes the isomerization between 2-isopropylmalate and 3-isopropylmalate, via the formation of 2-isopropylmaleate. In Staphylococcus aureus (strain JH1), this protein is 3-isopropylmalate dehydratase small subunit.